Reading from the N-terminus, the 1161-residue chain is Cell wall protein DAN4 (1161 aa).

A signal peptide spans 1-19 (MVNISIVAGIVALATSAAA). Disordered stretches follow at residues 123–309 (TSTS…SASS), 326–345 (TPATSTASTDHTTSSVSTTN), 354–547 (TTTS…SSFG), and 691–713 (STDSVSPNIPFSEISSSPESSTA). Residues 134 to 286 (TSTTPTTTIT…TTSTTSTTST (153 aa)) form a 46 X 3 AA tandem repeats of T-[SP]-T region. Over residues 354 to 372 (TTTSDTYISSSSPSQVTSS) the composition is skewed to low complexity. 14 tandem repeats follow at residues 373–384 (AEPTTVSEVTSS), 385–396 (VEPTRSSQVTSS), 397–408 (AEPTTVSEFTSS), 409–420 (VEPTRSSQVTSS), 421–432 (AEPTTVSEFTSS), 433–444 (VEPTRSSQVTSS), 445–456 (AEPTTVSEFTSS), 457–468 (VEPTRSSQVTSS), 469–480 (AEPTTVSEFTSS), 481–492 (VEPTRSSQVTSS), 493–504 (AEPTTVSEFTSS), 505–516 (VEPIRSSQVTSS), 517–528 (AEPTTVSEVTSS), and 529–540 (VEPIRSSQVTTT). A 14 X 12 AA approximate tandem repeats region spans residues 373–540 (AEPTTVSEVT…PIRSSQVTTT (168 aa)). Residues 373-547 (AEPTTVSEVT…TTTEPVSSFG (175 aa)) show a composition bias toward polar residues. 2 repeat units span residues 826–913 (EDSV…EDNE) and 914–1001 (EDIT…EDNE). The 2.5 X 88 AA approximate tandem repeats stretch occupies residues 826–1040 (EDSVLTKTQV…SPVSSFNSKA (215 aa)). The stretch at 1002-1040 (EDVASTKTELLTMETTITSCSGGICTTLMSPVSSFNSKA) is one 2-3; truncated repeat. Asn-1137 carries GPI-anchor amidated asparagine lipidation. The propeptide at 1138–1161 (GAYNFDKDNIFGTAIVAVVALLLL) is removed in mature form.

Belongs to the SRP1/TIP1 family. Extensively O-glycosylated. In terms of processing, the GPI-anchor is attached to the protein in the endoplasmic reticulum and serves to target the protein to the cell surface. There, the glucosamine-inositol phospholipid moiety is cleaved off and the GPI-modified mannoprotein is covalently attached via its lipidless GPI glycan remnant to the 1,6-beta-glucan of the outer cell wall layer.

It localises to the secreted. Its subcellular location is the cell wall. The protein localises to the cell membrane. Its function is as follows. Component of the cell wall. This Saccharomyces cerevisiae (strain ATCC 204508 / S288c) (Baker's yeast) protein is Cell wall protein DAN4.